A 364-amino-acid polypeptide reads, in one-letter code: DNA replication and repair protein RecF (364 aa).

Residue 30-37 (GENAQGKT) participates in ATP binding.

The protein belongs to the RecF family.

The protein localises to the cytoplasm. Its function is as follows. The RecF protein is involved in DNA metabolism; it is required for DNA replication and normal SOS inducibility. RecF binds preferentially to single-stranded, linear DNA. It also seems to bind ATP. The protein is DNA replication and repair protein RecF of Streptococcus suis (strain 98HAH33).